The primary structure comprises 200 residues: Regulator of free ubiquitin chains 1 (200 aa).

Belongs to the RFU1 family. Interacts with BRO1 and DOA4.

It is found in the endosome. In terms of biological role, inhibitor of the DOA4 deubiquitinase involved in the regulation of protein degradation by the proteasome and maintenance of a normal level of free ubiquitin. The chain is Regulator of free ubiquitin chains 1 (RFU1) from Saccharomyces cerevisiae (strain RM11-1a) (Baker's yeast).